Here is a 256-residue protein sequence, read N- to C-terminus: Floral homeotic protein APETALA 1 (256 aa).

In terms of domain architecture, MADS-box spans 1–61 (MGRGRVQLKR…GKLFEYSTDS (61 aa)). The K-box domain occupies 88 to 178 (NTNWSMEYNR…SKQIKEREKI (91 aa)). A disordered region spans residues 184–206 (EQWDQQNHGHNMPPPPPPQQHQI).

As to quaternary structure, homodimer capable of binding to CArG-box sequences.

The protein localises to the nucleus. In terms of biological role, transcription factor that promotes early floral meristem identity in synergy with LEAFY. Displays a redundant function with CAULIFLOWER in the up-regulation of LEAFY. Required subsequently for the transition of an inflorescence meristem into a floral meristem, and for the normal development of sepals and petals in flowers. Regulates positively B class homeotic proteins. This chain is Floral homeotic protein APETALA 1 (AP1), found in Arabidopsis lyrata subsp. lyrata (Lyre-leaved rock-cress).